Reading from the N-terminus, the 108-residue chain is Putative disulfide oxidoreductase YuzD (108 aa).

A disulfide bridge connects residues cysteine 16 and cysteine 19.

The sequence is that of Putative disulfide oxidoreductase YuzD (yuzD) from Bacillus subtilis (strain 168).